The following is a 2551-amino-acid chain: Piezo-type mechanosensitive ion channel component (2551 aa).

8 helical membrane passes run 5–25 (YACM…AALM), 27–47 (PVGI…VPLA), 56–76 (VTAF…GHIT), 106–126 (FIDL…LVFA), 204–226 (IHFE…FAAV), 231–250 (VPGG…WATC), 256–276 (GFAL…LSIV), and 320–340 (LSLD…ALAL). The segment at 354–375 (STRKARTPQPLESGSSVAPSVT) is disordered. The segment covering 363–375 (PLESGSSVAPSVT) has biased composition (polar residues). 9 helical membrane passes run 395-415 (TTTS…GFIY), 424-444 (ILMM…LLLS), 463-483 (PFIV…GMDL), 516-536 (VPLI…RQFF), 548-568 (LADF…SYLI), 588-608 (LLVR…AITG), 611-631 (MTGF…VFQS), 639-659 (IMYG…ILIY), and 695-715 (FLHL…VHYF). The span at 731 to 741 (GSAQQKPTETT) shows a compositional bias: polar residues. Positions 731-772 (GSAQQKPTETTALEPAPSKRRGSAGSLRKSQGPSAEAAPGAT) are disordered. A run of 12 helical transmembrane segments spans residues 819–839 (IAAF…FVGF), 857–877 (LISF…IEYL), 910–930 (LMSL…HAVI), 973–993 (LNFG…VSTI), 994–1014 (TYRQ…LLLL), 1022–1042 (IWGV…IVLV), 1071–1091 (GALH…LVIL), 1152–1172 (VLCG…TNIA), 1174–1194 (LLAL…SDFY), 1198–1218 (IHTI…NILI), 1239–1259 (WLVH…QIML), and 1275–1295 (ITHQ…IFQL). 2 disordered regions span residues 1426–1521 (NITE…AKDS) and 1592–1658 (ESDE…PQQQ). Residues 1430-1448 (SEMKMQRRKTLYDKSKDAP) show a composition bias toward basic and acidic residues. Residues 1466-1477 (ATASSSASPAPT) are compositionally biased toward low complexity. Over residues 1497–1511 (QTSKETSDSKSKMEV) the composition is skewed to basic and acidic residues. Low complexity-rich tracts occupy residues 1621 to 1634 (PTST…TTTP) and 1644 to 1658 (LQPL…PQQQ). The next 4 membrane-spanning stretches (helical) occupy residues 1718–1738 (ISSW…VVFI), 1741–1761 (VVNA…WGTL), 1770–1790 (FWVT…IFQF), and 1817–1837 (AHYA…RYLL). The segment at 1854 to 1876 (FTKPTASIDERDDSDNLSQPDSR) is disordered. Transmembrane regions (helical) follow at residues 1937 to 1957 (ALMF…FTAF), 1979 to 1999 (IPFL…RALY), 2008 to 2028 (IIFH…VVPA), 2033 to 2053 (TFNS…YMLL), 2075 to 2095 (FSMV…LYEL), 2151 to 2171 (IMGG…LCLF), and 2431 to 2451 (TFSF…VLLA). The interval 2522 to 2551 (EYVDDDGDTDSIPSRMSVRRPEQLQPQQPQ) is disordered.

It belongs to the PIEZO (TC 1.A.75) family.

Its subcellular location is the cell membrane. Component of a mechanosensitive channel required for rapidly adapting mechanically activated (MA) currents. Plays a major role in nociception (response to strong or painful touch). Required for maintaining the mechanosensitivity of tarsal bristle mechanosensors. During their evalulation of potential egg-laying sites, females determine the softest substrate for their eggs first by making a coarse evaluation of substrate hardness using mechanosensitive channels nan and Piezo in the leg tarsal bristles, followed by a much finer assessment using nan, iav and Tmc mechanosensitive channels on the labellum. Acts in the nompC- and nan-expressing neurons of the female leg tarsals, to sense the mild differences in egg-laying substrate stiffness. This chain is Piezo-type mechanosensitive ion channel component, found in Drosophila melanogaster (Fruit fly).